An 815-amino-acid chain; its full sequence is Phenylalanine--tRNA ligase beta subunit (815 aa).

Positions 39–148 (ATELQKFEVA…EYAVVGDNFT (110 aa)) constitute a tRNA-binding domain. In terms of domain architecture, B5 spans 420 to 495 (LQKIPLDFSV…RIYGYDKIES (76 aa)). The Mg(2+) site is built by Asp-473, Asp-479, Glu-482, and Glu-483. Positions 721-814 (SDFQANFRDY…ISQKFQGTLR (94 aa)) constitute an FDX-ACB domain.

The protein belongs to the phenylalanyl-tRNA synthetase beta subunit family. Type 1 subfamily. As to quaternary structure, tetramer of two alpha and two beta subunits. The cofactor is Mg(2+).

Its subcellular location is the cytoplasm. The enzyme catalyses tRNA(Phe) + L-phenylalanine + ATP = L-phenylalanyl-tRNA(Phe) + AMP + diphosphate + H(+). This chain is Phenylalanine--tRNA ligase beta subunit, found in Rickettsia typhi (strain ATCC VR-144 / Wilmington).